We begin with the raw amino-acid sequence, 143 residues long: UPF0260 protein plu2141 (143 aa).

This sequence belongs to the UPF0260 family.

The sequence is that of UPF0260 protein plu2141 from Photorhabdus laumondii subsp. laumondii (strain DSM 15139 / CIP 105565 / TT01) (Photorhabdus luminescens subsp. laumondii).